The following is a 38-amino-acid chain: Photosystem II reaction center protein L (38 aa).

Residues 17–37 (SLYWGLLLIFVLAVSFSNYFF) form a helical membrane-spanning segment.

It belongs to the PsbL family. In terms of assembly, PSII is composed of 1 copy each of membrane proteins PsbA, PsbB, PsbC, PsbD, PsbE, PsbF, PsbH, PsbI, PsbJ, PsbK, PsbL, PsbM, PsbT, PsbX, PsbY, PsbZ, Psb30/Ycf12, at least 3 peripheral proteins of the oxygen-evolving complex and a large number of cofactors. It forms dimeric complexes.

Its subcellular location is the plastid. It localises to the chloroplast thylakoid membrane. One of the components of the core complex of photosystem II (PSII). PSII is a light-driven water:plastoquinone oxidoreductase that uses light energy to abstract electrons from H(2)O, generating O(2) and a proton gradient subsequently used for ATP formation. It consists of a core antenna complex that captures photons, and an electron transfer chain that converts photonic excitation into a charge separation. This subunit is found at the monomer-monomer interface and is required for correct PSII assembly and/or dimerization. This chain is Photosystem II reaction center protein L, found in Amborella trichopoda.